The primary structure comprises 2488 residues: MSGISDHDYQVLVNEFNATEDISLLGSRLDQLFEQVADRFPDNTAVIHNESEVTFKQLNSSANILARCLAKRGLQQGDVVGLAVSRSIDLIAAMLAVLKLGAAYVPIDPSFPAERINQMVEDAGLRLILLSGRPTKGLGRWASLCLSVSEARDGSVTDGTNLETEIQTRDLAYVIYTSGSTGRPKGVEISHGAAANFLSSLRKHEPGCSERDRLLAITTISFDMSALELLLPLVSGSAMIVANTSAVKDPRELISLMARHKVTILQATPATWTMLLESGWKGNPRLSKVICGGEPLSRQLADRLLAAADSVWNVYGPSETTYGSVGRVGQGDIVVGNPVANGRIYVLDDNMSPVPIGSEGEVYIGGGSVSNGYRNKAELTRSRFLVNPFHGGVFFRTGDLARFIAPGKLQVVGRIDGVVKIRGHRIDVGDIEAVLVDHANVSEAVVVSRDDRLVAYCVLHAPCHDAASLDGILRPWVAERLPAYMLPTFFVQMDALPLSPSEKVNRKALPDPIEAMQHQTMIQPTSELEQRIQAIWSDILGHDRFGIEDNFFRIGGDSVRIIRMQAALEKQLHRPVPTPKLFEHYTIKALAAYLAGTGRENNNESQAVSQTFAGSHEDIAIVSMACRLPGGVATPEALWQLLQSGGDTIIDVPKDRWDADKLYNADANIDGTSYCRRGGFLDAIYSYDASFFGISPREAQAMDPTHNLMLELCWEGFERSGYTRDQLSGSATGVFLGVSNNATTNGTPPDLKGYSITGSASATMCGRLSHTLGLRGPSLAVDTACSSSLVATHLACNALRQGECSMALAGGVSLLTTPGIHIEFSKLGGLSADGRCRAFSDDTDGTGFSEGAAIIVLKRLSDARRDGDDIHAVLRGTAVMHGGSSAGLTAPSGPGQVALLRNALARAALEPGDIDYVEAHGTATKLGDPIEATALAEVFGTERSGSDPLRIGSAKSNLGHTQAAAGVVGLLKVVLSMNHDTLPRTLHVREPMAAVDWKRTNMELVLQNRPWLPNNNRLRRAGVSAFGIGGTNAHVIVEESPPPAVEETGNITLPSLPATLPFVLSGQGDSALRAQAEKLRLHIESGAGKDSPLRDVAYSLATCRSHLHRRLVVMAGDKAETLEKLASVSSGPTQPLSVNEVGSPTVAMLFTGQGSQLPGMGKDLYAVYPVFRDALDEIAAKFTDLERPLLDIMWAESGSENAALLSRTDFAQPALFALEVSLWKLWQSWGVKPDFLLGHSVGELAAAHAAGVLDLSDACRLVMMRGRLMQAIPRQGKMASVEASSAEVSAAIQELGQHDKVEIAGYNTPLQTVISGHEEAVEATSVYMSKLGRKTKLLDTSHAFHSFHMNGMLDDLRALAQNIRFSPPKMRIISSMTGRLAGAGELERPEYWAQQARNAVRFSDAFQTLAGQGANVFLELGPSAMLCGLGAACLADPGQVGAALWLPSLKPNMNGPLVIQSSLSELHVRHVPVDWAAYFKPFDCKRVMLPTYAFQREDFRPANKASWFDVASLSTGTNDAAPRVQDMMFEINWRRVETKSIQPRGAWGLLCPSGETAWTTEAQRALLATGIQLVAVSKPHEADQLDGLLSLWDSDADTVQMAHGVTALALAQLQEAIRTGLGAPIVWVTRHAVGAGADDRPVNIGAGPLWGLMRAARSEHPELRLRLIDVDEETDRASLSQAIMLADQTEIAVRREQLLMPHMERAGLAAPLPVGQPFVRTDGAVLVTGGLGDLGSRVARRLATAHGVCDLVLVSRQGTNSPGADALVAELAELGAKATIVGCDLADLDSLGSVMQLFTPDRPLRGVVHAAGVVDSGTLSSLTPRKCAAVFAPKVDGLWNLHQLTKHMDLDLFMMFSSISGIIGLPGLGNYAAANSFIDSLAHLRRAQGLPASSVAYGTWAGDGMATTLVPTTRAHLSQLGLGFLPPEAGLEIFEHAVYQGRALTVAAVLDLQRLRAYYEEQGGVPPLLNSMLGGTKVQKPADEVVNLRDLLADAAPEQHSSIVLHMVQATIAKALGYTRAEDVDASRPMQELGIDSLTAILTRNHLATLTGMALPPNIALLYPNLKSLSEFLLCRLMDDVESSTSSPSDTDGATPSTPTSAASCVDMADIRRGVLDSTFQFNNPVSPGVPGTVFVTGATGFVGTFMIHEFLQRRISVYCLVRASGSQEAQQRMITTLKQYGLWRPEHEPLLVSVAGDLSQPLLGLGEVVFDDLASRVDAILHSGALVDWMRPLDDYIGPNVLGTHEVLRLASCGRAKAIHFISTISTLPIHAGYGLAEHDGEYGYGTSKYLAEKMVVAARFRGAKASSYRLPFVAASAASGRFRLDRGDFLNNLVTGSLDLGAFPLINADLSSVLPVDYLCGTIAAIMTEDQERVGEDYDFVNPQALTFKHFFEMMCSVSGGKEMVSFGEWHRRALEYAAAHPTSSLARIATVLDGYNDKTVGSLVSGSPVGKHVLGLDAYRAPPLDEEYVRRYVHCIEAARAKMRT.

The tract at residues 33 to 422 (FEQVADRFPD…GRIDGVVKIR (390 aa)) is adenylation (A) domain. In terms of domain architecture, Carrier 1 spans 523–598 (QPTSELEQRI…ALAAYLAGTG (76 aa)). Serine 558 carries the O-(pantetheine 4'-phosphoryl)serine modification. A Ketosynthase family 3 (KS3) domain is found at 616–1039 (HEDIAIVSMA…GTNAHVIVEE (424 aa)). Catalysis depends on for beta-ketoacyl synthase activity residues cysteine 785, histidine 920, and histidine 960. Positions 1149–1471 (LFTGQGSQLP…SLSELHVRHV (323 aa)) are malonyl-CoA:ACP transacylase (MAT) domain. Residues 1723–1901 (GAVLVTGGLG…ASSVAYGTWA (179 aa)) are ketoreductase (KR) domain. A Carrier 2 domain is found at 2002-2077 (SIVLHMVQAT…SLSEFLLCRL (76 aa)). Serine 2037 bears the O-(pantetheine 4'-phosphoryl)serine mark. The segment at 2084–2103 (STSSPSDTDGATPSTPTSAA) is disordered. Positions 2136–2364 (VTGATGFVGT…VLPVDYLCGT (229 aa)) are thioester reductase (TE) domain.

In the N-terminal section; belongs to the NRP synthetase family.

It catalyses the reaction L-pipecolate + malonyl-CoA + 2 NADPH + 4 H(+) = (8aS)-octahydroindolizin-1-one + CO2 + 2 NADP(+) + CoA + 2 H2O. The enzyme catalyses L-pipecolate + malonyl-CoA + 3 NADPH + 5 H(+) = (1R,8aS)-octahydroindolizin-1-ol + CO2 + 3 NADP(+) + CoA + 2 H2O. It carries out the reaction L-pipecolate + malonyl-CoA + 3 NADPH + 5 H(+) = (1S,8aS)-octahydroindolizin-1-ol + CO2 + 3 NADP(+) + CoA + 2 H2O. The protein operates within mycotoxin biosynthesis. PKS-NRPS hybrid synthetase; part of the gene cluster that mediates the biosynthesis of swainsonine (SW), a cytotoxic fungal alkaloid and a potential cancer therapy drug. Swainsonine production occurs via a multibranched pathway and is dispensable for fungal colonization of plants and infection of insect hosts. The first step of swainsonine biosynthesis is the production of the precursor pipecolic acid (PA) via conversion of L-lysine (Lys) to 1-piperideine-6-carboxylate (P6C) by the aminotransferase swnA, the latter being further reduced to PA by the reductase swnR. PA can be converted from lysine by both the SW biosynthetic cluster and the unclustered genes such as lysine cyclodeaminase. The PKS-NRPS hybrid synthetase swnK uptakes and condensates PA and malonyl-CoA with and without skipping of the ketoreductase (KR) domain in order to produce 3 intermediates, 1-oxoindolizidine, (1S)-1-hydroxyindolizin, and (1R)-1-hydroxyindolizine; with the transisomer (1S)-1-hydroxyindolizin being predominant. The terminal thioester reductase (TE) domain of swnK is involved in reduction of the thioester bond to release the intermediate aldehydes. The oxidoreductase swnN could contribute to the reduction of 1-oxoindolizidine to (1S)-1-hydroxyindolizin and (1R)-1-hydroxyindolizine, contributing to the major route of SW production. The dioxygenase swnH2 would be responsible for the oxidization of (1R)-1-hydroxyindolizine into (1R,2S)-1,2-dihydroxyindolizine and of (1S)-1-hydroxyindolizin to yield both (1R,2S)-1,2-dihydroxyindolizine and (1S,2S)-1,2-dihydroxyindolizine. The dioxygenase swnH1 then performs the conversion of the 1,2-dihydroxyindolizine epimers to SW. The sequence is that of PKS-NRPS hybrid synthetase swnK from Metarhizium robertsii (strain ARSEF 23 / ATCC MYA-3075) (Metarhizium anisopliae (strain ARSEF 23)).